A 292-amino-acid polypeptide reads, in one-letter code: ATP synthase gamma chain (292 aa).

The protein belongs to the ATPase gamma chain family. In terms of assembly, F-type ATPases have 2 components, CF(1) - the catalytic core - and CF(0) - the membrane proton channel. CF(1) has five subunits: alpha(3), beta(3), gamma(1), delta(1), epsilon(1). CF(0) has three main subunits: a, b and c.

Its subcellular location is the cell inner membrane. Functionally, produces ATP from ADP in the presence of a proton gradient across the membrane. The gamma chain is believed to be important in regulating ATPase activity and the flow of protons through the CF(0) complex. This chain is ATP synthase gamma chain, found in Hyphomonas neptunium (strain ATCC 15444).